A 100-amino-acid polypeptide reads, in one-letter code: Defensin-6 (100 aa).

A signal peptide spans 1–19; the sequence is MRTLTILTAVLLVALQAKA. The propeptide occupies 20–68; sequence EPLQAEDEPLQAKAYEADAQEQRGANDQDFAVSFAEDASSSLRALGSTR. 3 cysteine pairs are disulfide-bonded: Cys72–Cys99, Cys74–Cys88, and Cys78–Cys98.

Belongs to the alpha-defensin family. As to quaternary structure, homodimer. Self-assembles into higher-order oligomers termed nanonets, fibril-like structures that entrap microbes. Self-assembly into nanonets seems to protect against proteolytic digestion in duodenal fluid. Interacts with Y.enterocolitica invasin and S.typhimurium fliC/flagellim; the interaction creates an anchoring site for progressive DEFA6 self-assembly into nanonets. Proteolytically cleaved by trypsin at Arg-68; the propeptide is stored in the tissue of the small intestine and the mature peptide is found in the luminal fluid; cleavage may occur during or after release into the lumen. The N-terminal propeptide region suppresses self-assembly and renders DEFA6 propeptide unable to agglutinate bacteria and protect human epithelial cells from bacterial invasion. Post-translationally, under reducing conditions, naturally present in the gut owing to the low redox potential or enzymatically generated by the thioredoxin system, the disulfide bridges are opened leading to a conformational change of DEF6, thereby changing its antimicrobial spectrum. The reduced form exhibits inhibitory activity against anaerobic bacteria, in contrast to the minimal antimicrobial activity of the disulfide-linked oxidized form. The formation of higher-order nanonets and bacterial entrapment is independent of the redox state.

Its subcellular location is the secreted. It localises to the cytoplasmic vesicle. It is found in the secretory vesicle. Its function is as follows. Host-defense peptide that contributes to intestinal innate immunity and mediates homeostasis at mucosal surfaces by forming higher-order oligomers that capture bacteria and prevent microbial invasion of the epithelium. After binding to bacterial surface proteins, undergoes ordered self-assembly to form fibril-like nanonets that surround and entangle bacteria and thereby prevent bacterial invasion across the epithelial barrier. Entangles and agglutinates Gram-negative bacteria, such as E.coli, S.typhimurium and Y.enterocolitica, and Gram-positive bacteria such as L.monocytogenes, thereby protecting the intestine against invasion by enteric bacterial pathogens. Blocks adhesion of C.albicans to intestinal epithelial cells and thereby suppresses fungal invasion of epithelial cells and biofilm formation. Under reducing conditions and in an acidic environment similar to the intestinal milieu, exhibits inhibitory activity against anaerobic bacteria such as B.adolescentis, L.acidophilus, and B.breve, as well as B.longum and S.thermophilus, possibly by leading to alterations in bacterial cell envelope structures. The disulfide-linked oxidized form exhibits negligible antimicrobial activity against Gram-negative and Gram-positive bacteria, as compared to the enteric defensin DEFA5. The sequence is that of Defensin-6 (DEFA6) from Pan troglodytes (Chimpanzee).